The sequence spans 217 residues: Protein-L-isoaspartate O-methyltransferase (217 aa).

Serine 59 is a catalytic residue.

This sequence belongs to the methyltransferase superfamily. L-isoaspartyl/D-aspartyl protein methyltransferase family.

It is found in the cytoplasm. The enzyme catalyses [protein]-L-isoaspartate + S-adenosyl-L-methionine = [protein]-L-isoaspartate alpha-methyl ester + S-adenosyl-L-homocysteine. Catalyzes the methyl esterification of L-isoaspartyl residues in peptides and proteins that result from spontaneous decomposition of normal L-aspartyl and L-asparaginyl residues. It plays a role in the repair and/or degradation of damaged proteins. The sequence is that of Protein-L-isoaspartate O-methyltransferase (pcm) from Methanothermobacter thermautotrophicus (strain ATCC 29096 / DSM 1053 / JCM 10044 / NBRC 100330 / Delta H) (Methanobacterium thermoautotrophicum).